The primary structure comprises 195 residues: Large ribosomal subunit protein bL25 (195 aa).

Belongs to the bacterial ribosomal protein bL25 family. CTC subfamily. As to quaternary structure, part of the 50S ribosomal subunit; part of the 5S rRNA/L5/L18/L25 subcomplex. Contacts the 5S rRNA. Binds to the 5S rRNA independently of L5 and L18.

Its function is as follows. This is one of the proteins that binds to the 5S RNA in the ribosome where it forms part of the central protuberance. The protein is Large ribosomal subunit protein bL25 of Chlorobium chlorochromatii (strain CaD3).